The sequence spans 79 residues: Cell division protein ZapB (79 aa).

Positions methionine 1 to aspartate 78 form a coiled coil.

It belongs to the ZapB family. Homodimer. The ends of the coiled-coil dimer bind to each other, forming polymers. Interacts with FtsZ.

The protein resides in the cytoplasm. Functionally, non-essential, abundant cell division factor that is required for proper Z-ring formation. It is recruited early to the divisome by direct interaction with FtsZ, stimulating Z-ring assembly and thereby promoting cell division earlier in the cell cycle. Its recruitment to the Z-ring requires functional FtsA or ZipA. In Hamiltonella defensa subsp. Acyrthosiphon pisum (strain 5AT), this protein is Cell division protein ZapB.